Consider the following 639-residue polypeptide: Zinc finger protein ZIC 5 (639 aa).

Disordered stretches follow at residues 113–171 (PCGG…GHSR), 189–251 (HGAP…GHPH), 323–355 (PGPH…HLPG), and 379–409 (PDEL…PCSK). Pro residues predominate over residues 124-150 (SAPPPPAPPLPPTPSPPPPPPPPPPPA). 2 stretches are compositionally biased toward pro residues: residues 331–343 (APPP…PAPA) and 385–401 (LPPP…PPPA). The C2H2-type 1; atypical zinc-finger motif lies at 434–461 (HVCFWEDCPREGKPFKAKYKLINHIRVH). C2H2-type zinc fingers lie at residues 467 to 491 (FPCP…KRTH), 497 to 521 (FKCE…SHVH), and 527 to 551 (YYCK…MKIH). The disordered stretch occupies residues 548-568 (MKIHCKSPPPSPGPLGYSSVG). Phosphoserine is present on residues Ser554, Ser558, and Ser576. Residues 607–639 (APSHLHTPSSNGTTSETEDEEIYGNPEVVRTIH) form a disordered region. A compositionally biased stretch (polar residues) spans 612–621 (HTPSSNGTTS).

The protein belongs to the GLI C2H2-type zinc-finger protein family.

It is found in the nucleus. Essential for neural crest development, converting cells from an epidermal fate to a neural crest cell fate. Binds to DNA. This chain is Zinc finger protein ZIC 5 (ZIC5), found in Homo sapiens (Human).